Consider the following 191-residue polypeptide: Hypoxanthine/guanine phosphoribosyltransferase (191 aa).

It belongs to the purine/pyrimidine phosphoribosyltransferase family. Archaeal HPRT subfamily. In terms of assembly, homodimer.

It is found in the cytoplasm. It catalyses the reaction IMP + diphosphate = hypoxanthine + 5-phospho-alpha-D-ribose 1-diphosphate. The enzyme catalyses GMP + diphosphate = guanine + 5-phospho-alpha-D-ribose 1-diphosphate. Its pathway is purine metabolism; IMP biosynthesis via salvage pathway; IMP from hypoxanthine: step 1/1. In terms of biological role, catalyzes a salvage reaction resulting in the formation of IMP that is energically less costly than de novo synthesis. In Methanocella arvoryzae (strain DSM 22066 / NBRC 105507 / MRE50), this protein is Hypoxanthine/guanine phosphoribosyltransferase.